The primary structure comprises 156 residues: 6,7-dimethyl-8-ribityllumazine synthase (156 aa).

5-amino-6-(D-ribitylamino)uracil is bound by residues Phe-23, 57–59, and 81–83; these read AFE and AVI. 86–87 contributes to the (2S)-2-hydroxy-3-oxobutyl phosphate binding site; it reads AT. The Proton donor role is filled by His-89. Phe-114 contacts 5-amino-6-(D-ribitylamino)uracil. Arg-128 contributes to the (2S)-2-hydroxy-3-oxobutyl phosphate binding site.

It belongs to the DMRL synthase family.

The catalysed reaction is (2S)-2-hydroxy-3-oxobutyl phosphate + 5-amino-6-(D-ribitylamino)uracil = 6,7-dimethyl-8-(1-D-ribityl)lumazine + phosphate + 2 H2O + H(+). Its pathway is cofactor biosynthesis; riboflavin biosynthesis; riboflavin from 2-hydroxy-3-oxobutyl phosphate and 5-amino-6-(D-ribitylamino)uracil: step 1/2. Catalyzes the formation of 6,7-dimethyl-8-ribityllumazine by condensation of 5-amino-6-(D-ribitylamino)uracil with 3,4-dihydroxy-2-butanone 4-phosphate. This is the penultimate step in the biosynthesis of riboflavin. The protein is 6,7-dimethyl-8-ribityllumazine synthase of Sulfurovum sp. (strain NBC37-1).